The sequence spans 79 residues: uncharacterized protein (79 aa).

This is an uncharacterized protein from Saccharomyces cerevisiae (strain ATCC 204508 / S288c) (Baker's yeast).